A 1401-amino-acid polypeptide reads, in one-letter code: Kinesin-like protein KIF27 (1401 aa).

Positions 5–341 (PVKVAVRIRP…LKYANRARNI (337 aa)) constitute a Kinesin motor domain. 84–91 (GQTGSGKT) contributes to the ATP binding site. Coiled coils occupy residues 352-413 (ESDR…GYQC) and 489-557 (LAAD…KLNL). S643, S646, S672, S675, and S704 each carry phosphoserine. Positions 643–662 (SDNSDDEESEGQEKSGTRCR) are disordered. 4 coiled-coil regions span residues 705–886 (QELN…IQLK), 916–1070 (DHLQ…AAIE), 1118–1154 (NKVVNLREAERKQQLYNEEMKMKVLERDNMVRELESA), and 1190–1219 (EGIMETFKTYEDKIQQLEKDLYFYKKTSRD). Phosphoserine is present on S999. Basic and acidic residues predominate over residues 1259–1280 (EELKWASRPESMKLSGREREMD). Residues 1259-1332 (EELKWASRPE…TETDDNQFTK (74 aa)) form a disordered region. Positions 1281–1292 (SSASSLRTQPNP) are enriched in polar residues. S1367 and S1389 each carry phosphoserine.

Belongs to the TRAFAC class myosin-kinesin ATPase superfamily. Kinesin family. KIF27 subfamily. In terms of assembly, interacts with STK36. As to expression, testis, pancreatic islet, germ cell tumors and Jurkat T-cells.

It is found in the cytoplasm. The protein resides in the cytoskeleton. Its subcellular location is the cell projection. The protein localises to the cilium. Functionally, plays an essential role in motile ciliogenesis. The sequence is that of Kinesin-like protein KIF27 (KIF27) from Homo sapiens (Human).